The primary structure comprises 146 residues: Holo-[acyl-carrier-protein] synthase (146 aa).

Mg(2+) contacts are provided by Asp-9 and Glu-63.

The protein belongs to the P-Pant transferase superfamily. AcpS family. It depends on Mg(2+) as a cofactor.

It localises to the cytoplasm. It carries out the reaction apo-[ACP] + CoA = holo-[ACP] + adenosine 3',5'-bisphosphate + H(+). Its function is as follows. Transfers the 4'-phosphopantetheine moiety from coenzyme A to a Ser of acyl-carrier-protein. This is Holo-[acyl-carrier-protein] synthase from Burkholderia orbicola (strain MC0-3).